The primary structure comprises 336 residues: Phenylalanine--tRNA ligase alpha subunit (336 aa).

E259 contacts Mg(2+).

This sequence belongs to the class-II aminoacyl-tRNA synthetase family. Phe-tRNA synthetase alpha subunit type 1 subfamily. In terms of assembly, tetramer of two alpha and two beta subunits. Mg(2+) serves as cofactor.

It is found in the cytoplasm. It carries out the reaction tRNA(Phe) + L-phenylalanine + ATP = L-phenylalanyl-tRNA(Phe) + AMP + diphosphate + H(+). The sequence is that of Phenylalanine--tRNA ligase alpha subunit from Tropheryma whipplei (strain TW08/27) (Whipple's bacillus).